A 194-amino-acid chain; its full sequence is Peptidyl-tRNA hydrolase (194 aa).

The active-site Proton acceptor is the histidine 22. Positions 67, 69, and 115 each coordinate tRNA.

This sequence belongs to the PTH family. Monomer.

The protein resides in the cytoplasm. The catalysed reaction is an N-acyl-L-alpha-aminoacyl-tRNA + H2O = an N-acyl-L-amino acid + a tRNA + H(+). Its function is as follows. Hydrolyzes ribosome-free peptidyl-tRNAs (with 1 or more amino acids incorporated), which drop off the ribosome during protein synthesis, or as a result of ribosome stalling. Functionally, catalyzes the release of premature peptidyl moieties from peptidyl-tRNA molecules trapped in stalled 50S ribosomal subunits, and thus maintains levels of free tRNAs and 50S ribosomes. The chain is Peptidyl-tRNA hydrolase from Granulibacter bethesdensis (strain ATCC BAA-1260 / CGDNIH1).